A 399-amino-acid polypeptide reads, in one-letter code: Fructose-bisphosphate aldolase 1, chloroplastic (399 aa).

A chloroplast-targeting transit peptide spans 1 to 48 (MASSTATMLKASPVKSDWVKGQSLLLRQPSSVSAIRSHVAPSALTVRA). R96 is a binding site for substrate. A Phosphoserine modification is found at S158. K186 contacts substrate. S216 carries the phosphoserine modification. The Proton acceptor role is filled by E226. Catalysis depends on K268, which acts as the Schiff-base intermediate with dihydroxyacetone-P. 310–312 (SGG) lines the substrate pocket. K395 bears the N6,N6,N6-trimethyllysine mark.

It belongs to the class I fructose-bisphosphate aldolase family. In terms of assembly, homotetramer. Can be trimethylated at Lys-395 by LSMT-L, but the trimethylation has no effect in vitro on the kinetic properties of the enzyme. Post-translationally, S-glutathionylated. As to expression, highly expressed in rosettes leaves and cauline leaves.

It is found in the plastid. It localises to the chloroplast. Its subcellular location is the plastoglobule. The protein resides in the chloroplast stroma. It catalyses the reaction beta-D-fructose 1,6-bisphosphate = D-glyceraldehyde 3-phosphate + dihydroxyacetone phosphate. The protein operates within carbohydrate degradation; glycolysis; D-glyceraldehyde 3-phosphate and glycerone phosphate from D-glucose: step 4/4. Its function is as follows. Plays a key role in glycolysis and gluconeogenesis. The chain is Fructose-bisphosphate aldolase 1, chloroplastic from Arabidopsis thaliana (Mouse-ear cress).